Reading from the N-terminus, the 320-residue chain is Malate dehydrogenase (320 aa).

NAD(+) is bound by residues G10 to G15 and D34. The substrate site is built by R83 and R89. NAD(+) contacts are provided by residues N96 and I119 to N121. N121 and R152 together coordinate substrate. H176 functions as the Proton acceptor in the catalytic mechanism.

This sequence belongs to the LDH/MDH superfamily. MDH type 3 family.

It catalyses the reaction (S)-malate + NAD(+) = oxaloacetate + NADH + H(+). In terms of biological role, catalyzes the reversible oxidation of malate to oxaloacetate. The protein is Malate dehydrogenase of Methylobacterium sp. (strain 4-46).